Consider the following 66-residue polypeptide: Small ribosomal subunit protein eS27 (66 aa).

Cys-21, Cys-24, Cys-40, and Cys-43 together coordinate Zn(2+). Residues 21-43 (CRQCNNEQVIFSNATFPVRCLSC) form a C4-type zinc finger.

Belongs to the eukaryotic ribosomal protein eS27 family. Part of the 30S ribosomal subunit. Requires Zn(2+) as cofactor.

In Sulfolobus acidocaldarius (strain ATCC 33909 / DSM 639 / JCM 8929 / NBRC 15157 / NCIMB 11770), this protein is Small ribosomal subunit protein eS27.